The primary structure comprises 300 residues: MHTTDTETFEEQFAIEQRLVDSVVASFDSTTDPRLKELMQSLTRHLHAFIREVRLSEDEWSNAIAFLTAVGNITDDRRQEFILLSDVLGVSMQTIAVSNPAYEDATESTVFGPFFVEDAPEVTLGGDIAGGATGQPCWIEGTVTDTAGNPVPEARIEVWQNDEDGFYDVQYSDGRVSGRAHLFSDAHGRYRFWGMTPVPYPIPSDGPVGKMLAATNRSPMRVAHLHFMVTADGLRTLVTHIFVAGDPQLERGDSVFGVKDSLIKDFVEQPPGTPTPDGRHIGDRNWARCEFDIVLAPEQI.

Residues Tyr167, Tyr200, His224, and His226 each contribute to the Fe cation site.

Belongs to the intradiol ring-cleavage dioxygenase family. Fe(3+) is required as a cofactor.

The enzyme catalyses benzene-1,2,4-triol + O2 = maleylacetate + 2 H(+). It functions in the pathway aromatic compound metabolism. It participates in xenobiotic degradation. In terms of biological role, involved in the degradation of para-nitrophenol (4-NP). Catalyzes the conversion of hydroxyquinol to malelylacetate. In Rhodococcus opacus (Nocardia opaca), this protein is Hydroxyquinol 1,2-dioxygenase (npcC).